Reading from the N-terminus, the 438-residue chain is 23S rRNA (uracil(1939)-C(5))-methyltransferase RlmD (438 aa).

Positions Phe4 to Arg68 constitute a TRAM domain. Cys81, Cys87, Cys90, and Cys167 together coordinate [4Fe-4S] cluster. Residues Gln269, Phe298, Asn303, Glu319, Asn346, and Asp367 each coordinate S-adenosyl-L-methionine. The active-site Nucleophile is the Cys393.

It belongs to the class I-like SAM-binding methyltransferase superfamily. RNA M5U methyltransferase family. RlmD subfamily.

It catalyses the reaction uridine(1939) in 23S rRNA + S-adenosyl-L-methionine = 5-methyluridine(1939) in 23S rRNA + S-adenosyl-L-homocysteine + H(+). Catalyzes the formation of 5-methyl-uridine at position 1939 (m5U1939) in 23S rRNA. The polypeptide is 23S rRNA (uracil(1939)-C(5))-methyltransferase RlmD (Edwardsiella ictaluri (strain 93-146)).